Reading from the N-terminus, the 204-residue chain is Ras-related protein RABG1 (204 aa).

12–19 is a GTP binding site; sequence GDSGVGKT. An Effector region motif is present at residues 34–42; the sequence is HNSTIYVDL. GTP contacts are provided by residues 60–64, 122–125, and 155–156; these read DTAGQ, NKTD, and SA. Residues Cys-202 and Cys-204 are each lipidated (S-geranylgeranyl cysteine). Residue Cys-204 is modified to Cysteine methyl ester.

Belongs to the small GTPase superfamily. Rab family.

It localises to the cell membrane. Functionally, intracellular vesicle trafficking and protein transport. The chain is Ras-related protein RABG1 (RABG1) from Arabidopsis thaliana (Mouse-ear cress).